The chain runs to 469 residues: UTP--glucose-1-phosphate uridylyltransferase 2 (469 aa).

Position 2 is an N-acetylalanine (Ala-2). Residues 85–88, Lys-99, Gln-162, and Gly-191 each bind UTP; that span reads LNGG. Residue 87–88 coordinates substrate; that stretch reads GG. Substrate is bound by residues His-192 and 220 to 222; that span reads NSD. UTP is bound by residues Asp-222 and Lys-360.

It belongs to the UDPGP type 1 family. In terms of tissue distribution, expressed in cauline leaves, flowers and siliques.

The protein localises to the cytoplasm. It catalyses the reaction alpha-D-glucose 1-phosphate + UTP + H(+) = UDP-alpha-D-glucose + diphosphate. Its function is as follows. Converts glucose 1-phosphate to UDP-glucose, which is the major glycosyl donor for polysaccharides. Acts redundantly with UGP1 and is essential for the synthesis of sucrose, starch and cell wall, and callose deposition. The protein is UTP--glucose-1-phosphate uridylyltransferase 2 of Arabidopsis thaliana (Mouse-ear cress).